The chain runs to 427 residues: Gustatory receptor for sugar taste 43a (427 aa).

Residues 1 to 37 (MEISQPSIGIFYISKVLALAPYATVRNSKGRVEIGRS) lie on the Cytoplasmic side of the membrane. The chain crosses the membrane as a helical span at residues 38 to 63 (WLFTVYSATLTVVMVFLTYRGLLFDA). Topologically, residues 64–75 (NSEIPVRMKSAT) are extracellular. Residues R70 and D83 each coordinate beta-D-fructose. A helical membrane pass occupies residues 76 to 96 (SKVVTALDVSVVVMAIVSGVY). The Cytoplasmic segment spans residues 97–135 (CGLFSLNDTLELNDRLNKIDNTLNAYNNFRRDRWRALGM). The helical transmembrane segment at 136–158 (AAVSLLAISILVGLDVGTWMRIA) threads the bilayer. Residues 159–168 (QDMNIAQSDT) are Extracellular-facing. A helical transmembrane segment spans residues 169-193 (ELNVHWYIPFYSLYFILTGLQVNIA). Y182 contributes to the beta-D-fructose binding site. At 194 to 293 (NTAYGLGRRF…CVHLLSNSFG (100 aa)) the chain is on the cytoplasmic side. The chain crosses the membrane as a helical span at residues 294–316 (IAVLFILVSCLLHLVATAYFLFL). Position 310 (T310) interacts with beta-D-fructose. Residues 317–324 (ELLSKRDN) are Extracellular-facing. The chain crosses the membrane as a helical span at residues 325-346 (GYLWVQMLWICFHFLRLLMVVE). Residue H337 coordinates beta-D-fructose. The Cytoplasmic segment spans residues 347 to 402 (PCHLAARESRKTIQIVCEIERKVHEPILAEAVKKFWQQLLVVDADFSACGLCRVNR). The helical transmembrane segment at 403–423 (TILTSFASAIATYLVILIQFQ) threads the bilayer. Q421 provides a ligand contact to Ca(2+). Residues 424–427 (RTNG) lie on the Extracellular side of the membrane.

The protein belongs to the insect chemoreceptor superfamily. Gustatory receptor (GR) family. Gr21a subfamily. As to quaternary structure, homotetramer. Expressed in the adult labellar chemosensory neurons and in the adult head, abdomen, leg and wing. In larvae, is expressed in taste organs, as well as the brain and the gastrointestinal system.

It localises to the cell membrane. In terms of biological role, gustatory receptor which mediates acceptance or avoidance behavior, depending on its substrates. Gr43a is the main sugar receptor in larvae. Functions as a narrowly tuned fructose receptor in taste neurons but also as a fructose receptor in the brain. Necessary and sufficient to sense hemolymph fructose and promote feeding in hungry flies but suppress feeding in satiated flies. This Drosophila melanogaster (Fruit fly) protein is Gustatory receptor for sugar taste 43a (Gr43a).